A 697-amino-acid chain; its full sequence is Mediator of RNA polymerase II transcription subunit 16 (697 aa).

WD repeat units lie at residues 68-107 (GHQE…ANSW), 199-241 (RCRV…VSEK), 264-308 (DKFP…LPLN), and 622-663 (NQGS…CLPV).

This sequence belongs to the Mediator complex subunit 16 family. As to quaternary structure, component of the Mediator complex.

The protein localises to the nucleus. Component of the Mediator complex, a coactivator involved in the regulated transcription of nearly all RNA polymerase II-dependent genes. Mediator functions as a bridge to convey information from gene-specific regulatory proteins to the basal RNA polymerase II transcription machinery. Mediator is recruited to promoters by direct interactions with regulatory proteins and serves as a scaffold for the assembly of a functional preinitiation complex with RNA polymerase II and the general transcription factors. The chain is Mediator of RNA polymerase II transcription subunit 16 (med16) from Xenopus laevis (African clawed frog).